We begin with the raw amino-acid sequence, 740 residues long: Ribosomal protein S6 kinase alpha-6 (740 aa).

The Protein kinase 1 domain maps to 67-326 (FELLKVLGQG…VEEIKRHTFF (260 aa)). Residues 73–81 (LGQGSFGKV) and lysine 99 contribute to the ATP site. Aspartate 192 acts as the Proton acceptor in catalysis. An AGC-kinase C-terminal domain is found at 327–396 (STIDWNKLYR…VAPVSLEESK (70 aa)). The 258-residue stretch at 420–677 (YELKEDIGVG…AEQVLKHSWI (258 aa)) folds into the Protein kinase 2 domain. ATP-binding positions include 426–434 (IGVGSYSIC) and lysine 449. Residue aspartate 537 is the Proton acceptor of the active site.

This sequence belongs to the protein kinase superfamily. AGC Ser/Thr protein kinase family. S6 kinase subfamily. Forms a complex with either ERK1 or ERK2 in quiescent cells. Transiently dissociates following mitogenic stimulation. It depends on Mg(2+) as a cofactor.

The enzyme catalyses L-seryl-[protein] + ATP = O-phospho-L-seryl-[protein] + ADP + H(+). It catalyses the reaction L-threonyl-[protein] + ATP = O-phospho-L-threonyl-[protein] + ADP + H(+). Activated by multiple phosphorylations on threonine and serine residues. Functionally, serine/threonine kinase that may play a role in mediating the growth-factor and stress induced activation of the transcription factor CREB. The sequence is that of Ribosomal protein S6 kinase alpha-6 (rps6ka6) from Danio rerio (Zebrafish).